Consider the following 760-residue polypeptide: uncharacterized protein (760 aa).

Positions 1-20 are cleaved as a signal peptide; the sequence is MKFKLFLGSSFFGVATLLIA. Residue cysteine 21 is the site of N-palmitoyl cysteine attachment. A lipid anchor (S-diacylglycerol cysteine) is attached at cysteine 21. 3 disordered regions span residues 221 to 243, 272 to 315, and 705 to 741; these read ENAA…LQLK, AKTN…TSDD, and IKAT…NDKA. Basic and acidic residues predominate over residues 272–284; it reads AKTNGEKGNEKQE. Over residues 300-312 the composition is skewed to polar residues; sequence KNTSQDKTQNTQT. Over residues 705–721 the composition is skewed to basic and acidic residues; it reads IKATSKEGEQNQGKKGD.

This sequence belongs to the MG185/MG260 family.

The protein resides in the cell membrane. This is an uncharacterized protein from Mycoplasma pneumoniae (strain ATCC 29342 / M129 / Subtype 1) (Mycoplasmoides pneumoniae).